The following is a 307-amino-acid chain: METFKEYVTKRIDNTIPQVKEMFKLIWLGVADSMKLKGAIIRTIKSEVLRKNFIHCIFLNGIIFLGTYLIYLYWVSPMLNYLLNHFPTLSNMFTIIYFSLWVYPVYIFSIIANSKWYTEIAKESFVISGRTTFANSTNGILSSFVDEIYRNLLFGVILVMSAIIAFIPYTNFINFVIITWLYSFWCFDYKWILRGKWNLLQRIQYFETHWAYMFGYGLIFTTCSFFFPMLIGNAIFSILYPLFIILSISAKPTKMVNQDGILPKQIPIFYVPEIIVNVILKLYVKYKNTRGAAKSTTPSPSPTTKQN.

The next 2 membrane-spanning stretches (helical) occupy residues 53–73 and 92–112; these read FIHC…IYLY and MFTI…SIIA. An N-linked (GlcNAc...) asparagine glycan is attached at Asn135. 4 consecutive transmembrane segments (helical) span residues 153–173, 175–195, 225–245, and 260–280; these read LFGV…TNFI, FVII…ILRG, FFFP…LFII, and GILP…NVIL.

It belongs to the EI24 family.

The protein resides in the membrane. The polypeptide is Protein EI24 homolog (Dictyostelium discoideum (Social amoeba)).